Consider the following 130-residue polypeptide: Small ribosomal subunit protein uS8 (130 aa).

This sequence belongs to the universal ribosomal protein uS8 family. As to quaternary structure, part of the 30S ribosomal subunit. Contacts proteins S5 and S12.

In terms of biological role, one of the primary rRNA binding proteins, it binds directly to 16S rRNA central domain where it helps coordinate assembly of the platform of the 30S subunit. This chain is Small ribosomal subunit protein uS8, found in Ectopseudomonas mendocina (strain ymp) (Pseudomonas mendocina).